Here is a 691-residue protein sequence, read N- to C-terminus: Elongation factor G (691 aa).

Residues 8–282 (ERVRNIGIAA…AVVDYLPAPV (275 aa)) form the tr-type G domain. GTP is bound by residues 17 to 24 (AHIDAGKT), 81 to 85 (DTPGH), and 135 to 138 (NKMD).

This sequence belongs to the TRAFAC class translation factor GTPase superfamily. Classic translation factor GTPase family. EF-G/EF-2 subfamily.

Its subcellular location is the cytoplasm. Catalyzes the GTP-dependent ribosomal translocation step during translation elongation. During this step, the ribosome changes from the pre-translocational (PRE) to the post-translocational (POST) state as the newly formed A-site-bound peptidyl-tRNA and P-site-bound deacylated tRNA move to the P and E sites, respectively. Catalyzes the coordinated movement of the two tRNA molecules, the mRNA and conformational changes in the ribosome. This chain is Elongation factor G, found in Prochlorococcus marinus (strain MIT 9303).